The primary structure comprises 240 residues: 6-carboxyhexanoate--CoA ligase (240 aa).

The protein belongs to the BioW family. As to quaternary structure, homodimer. Mg(2+) is required as a cofactor.

It carries out the reaction heptanedioate + ATP + CoA = 6-carboxyhexanoyl-CoA + AMP + diphosphate. It participates in metabolic intermediate metabolism; pimeloyl-CoA biosynthesis; pimeloyl-CoA from pimelate: step 1/1. In terms of biological role, catalyzes the transformation of pimelate into pimeloyl-CoA with concomitant hydrolysis of ATP to AMP. This chain is 6-carboxyhexanoate--CoA ligase, found in Aquifex aeolicus (strain VF5).